We begin with the raw amino-acid sequence, 179 residues long: ATP-dependent protease subunit HslV (179 aa).

The active site involves Thr-9. Residues Ala-164, Cys-167, and Thr-170 each coordinate Na(+).

This sequence belongs to the peptidase T1B family. HslV subfamily. As to quaternary structure, a double ring-shaped homohexamer of HslV is capped on each side by a ring-shaped HslU homohexamer. The assembly of the HslU/HslV complex is dependent on binding of ATP.

Its subcellular location is the cytoplasm. It catalyses the reaction ATP-dependent cleavage of peptide bonds with broad specificity.. Its activity is regulated as follows. Allosterically activated by HslU binding. Its function is as follows. Protease subunit of a proteasome-like degradation complex believed to be a general protein degrading machinery. This is ATP-dependent protease subunit HslV from Syntrophobacter fumaroxidans (strain DSM 10017 / MPOB).